The following is a 340-amino-acid chain: Tetraacyldisaccharide 4'-kinase (340 aa).

50-57 lines the ATP pocket; sequence HGGGAGKT.

Belongs to the LpxK family.

It catalyses the reaction a lipid A disaccharide + ATP = a lipid IVA + ADP + H(+). Its pathway is glycolipid biosynthesis; lipid IV(A) biosynthesis; lipid IV(A) from (3R)-3-hydroxytetradecanoyl-[acyl-carrier-protein] and UDP-N-acetyl-alpha-D-glucosamine: step 6/6. In terms of biological role, transfers the gamma-phosphate of ATP to the 4'-position of a tetraacyldisaccharide 1-phosphate intermediate (termed DS-1-P) to form tetraacyldisaccharide 1,4'-bis-phosphate (lipid IVA). This is Tetraacyldisaccharide 4'-kinase from Rhodopseudomonas palustris (strain BisA53).